Consider the following 428-residue polypeptide: Serine--tRNA ligase (428 aa).

Threonine 231–glutamate 233 provides a ligand contact to L-serine. Residues arginine 262–glutamate 264 and valine 278 contribute to the ATP site. Position 285 (glutamate 285) interacts with L-serine. Glutamate 349–serine 352 is a binding site for ATP. Position 384 (serine 384) interacts with L-serine.

It belongs to the class-II aminoacyl-tRNA synthetase family. Type-1 seryl-tRNA synthetase subfamily. Homodimer. The tRNA molecule binds across the dimer.

It localises to the cytoplasm. It catalyses the reaction tRNA(Ser) + L-serine + ATP = L-seryl-tRNA(Ser) + AMP + diphosphate + H(+). It carries out the reaction tRNA(Sec) + L-serine + ATP = L-seryl-tRNA(Sec) + AMP + diphosphate + H(+). The protein operates within aminoacyl-tRNA biosynthesis; selenocysteinyl-tRNA(Sec) biosynthesis; L-seryl-tRNA(Sec) from L-serine and tRNA(Sec): step 1/1. Functionally, catalyzes the attachment of serine to tRNA(Ser). Is also able to aminoacylate tRNA(Sec) with serine, to form the misacylated tRNA L-seryl-tRNA(Sec), which will be further converted into selenocysteinyl-tRNA(Sec). The chain is Serine--tRNA ligase from Chlamydia muridarum (strain MoPn / Nigg).